A 595-amino-acid polypeptide reads, in one-letter code: ATPase family AAA domain-containing protein 3 (595 aa).

The disordered stretch occupies residues 1 to 48; sequence MSWLFGVQKNATPQIPDDFQAGAAPGGPQQPGQGQRQEGNSKMAYSFD. The Mitochondrial intermembrane portion of the chain corresponds to 1 to 243; the sequence is MSWLFGVQKN…LNQFLNDKTK (243 aa). A compositionally biased stretch (low complexity) spans 20-35; that stretch reads QAGAAPGGPQQPGQGQ. Coiled-coil stretches lie at residues 80–107 and 140–175; these read VTRQKEVENETKKIEAQLANMKSEHIRV and EELAMKARMQEESLRKQEESVKKQEQLRKQTIEHEL. A helical transmembrane segment spans residues 244–260; it reads IAAAVGGLTALAVGWYT. Residues 261-595 lie on the Mitochondrial matrix side of the membrane; the sequence is AKRGTGVTAR…GTTLKRETAV (335 aa). 349–356 contributes to the ATP binding site; sequence GPPGTGKT. A PDZ-binding motif is present at residues 592–595; the sequence is ETAV.

Belongs to the AAA ATPase family.

It is found in the mitochondrion inner membrane. The protein localises to the mitochondrion matrix. Its subcellular location is the mitochondrion nucleoid. In terms of biological role, essential for mitochondrial network organization, mitochondrial metabolism and cell growth at organism and cellular level. Important during development for the up-regulation of mitochondrial activity during the transition to higher larval stages. Regulates mitochondrial iron homeostasis. May play an important role in mitochondrial protein synthesis. May also participate in mitochondrial DNA replication. May bind to mitochondrial DNA D-loops and contribute to nucleoid stability. Plays a role in regulating the production of reactive oxygen species in response to heat stress. The sequence is that of ATPase family AAA domain-containing protein 3 from Caenorhabditis elegans.